We begin with the raw amino-acid sequence, 247 residues long: NAD-dependent protein deacetylase 2 (247 aa).

Positions 1–247 (MDQIRQLAQW…ASVRKQIQAE (247 aa)) constitute a Deacetylase sirtuin-type domain. The NAD(+) site is built by alanine 23, threonine 27, phenylalanine 34, arginine 35, glutamine 103, isoleucine 105, aspartate 106, and histidine 121. Residue phenylalanine 34 participates in nicotinamide binding. Residues isoleucine 105 and aspartate 106 each coordinate nicotinamide. Histidine 121 serves as the catalytic Proton acceptor. Residues cysteine 129, cysteine 132, cysteine 149, and cysteine 152 each coordinate Zn(2+). Positions 188, 189, 215, and 233 each coordinate NAD(+).

This sequence belongs to the sirtuin family. Class U subfamily. It depends on Zn(2+) as a cofactor.

Its subcellular location is the cytoplasm. The enzyme catalyses N(6)-acetyl-L-lysyl-[protein] + NAD(+) + H2O = 2''-O-acetyl-ADP-D-ribose + nicotinamide + L-lysyl-[protein]. In terms of biological role, NAD-dependent protein deacetylase which modulates the activities of several enzymes which are inactive in their acetylated form. This Geobacillus kaustophilus (strain HTA426) protein is NAD-dependent protein deacetylase 2.